A 341-amino-acid polypeptide reads, in one-letter code: Phosphoribosylformylglycinamidine cyclo-ligase (341 aa).

It belongs to the AIR synthase family.

It localises to the cytoplasm. The catalysed reaction is 2-formamido-N(1)-(5-O-phospho-beta-D-ribosyl)acetamidine + ATP = 5-amino-1-(5-phospho-beta-D-ribosyl)imidazole + ADP + phosphate + H(+). It functions in the pathway purine metabolism; IMP biosynthesis via de novo pathway; 5-amino-1-(5-phospho-D-ribosyl)imidazole from N(2)-formyl-N(1)-(5-phospho-D-ribosyl)glycinamide: step 2/2. The protein is Phosphoribosylformylglycinamidine cyclo-ligase of Agathobacter rectalis (strain ATCC 33656 / DSM 3377 / JCM 17463 / KCTC 5835 / VPI 0990) (Eubacterium rectale).